The following is a 329-amino-acid chain: MLKPMYYEFFFIFPKERELFESFLLDTTHLALEESSLENLKAFDDKETIEFISQSSWHYFATHDPLKEHLKEKPQHLKNFVILRSQKDLNNSLILALEAFCLNLKQNLQSEFDFFYLSRNLASKDWLEAYKQAILPVQCAKFYIHPSWHQKPSHISTDDCIMIDPALAFGSGHHESTSMCLELLSDLDLKRKNALDVGCGSGILSIALKKQGVSALVACDTDSLAVEETLKNFSLNQIPLLAQDKVIYGSTQKIEGRFDIIVANLVADVVKSLYSEFVRLCNHTLILSGILETHLNSVLQIYYNGFEILEQRQRNEWVALKLLKKQPIN.

S-adenosyl-L-methionine contacts are provided by Thr177, Gly198, Asp220, and Asn264.

Belongs to the methyltransferase superfamily. PrmA family.

It is found in the cytoplasm. It carries out the reaction L-lysyl-[protein] + 3 S-adenosyl-L-methionine = N(6),N(6),N(6)-trimethyl-L-lysyl-[protein] + 3 S-adenosyl-L-homocysteine + 3 H(+). Methylates ribosomal protein L11. The sequence is that of Ribosomal protein L11 methyltransferase from Helicobacter pylori (strain HPAG1).